Reading from the N-terminus, the 405-residue chain is Glucose-1-phosphate adenylyltransferase (405 aa).

Residues tyrosine 99, glycine 164, 179 to 180 (EK), and serine 197 each bind alpha-D-glucose 1-phosphate.

The protein belongs to the bacterial/plant glucose-1-phosphate adenylyltransferase family. In terms of assembly, homotetramer.

The catalysed reaction is alpha-D-glucose 1-phosphate + ATP + H(+) = ADP-alpha-D-glucose + diphosphate. The protein operates within glycan biosynthesis; glycogen biosynthesis. In terms of biological role, involved in the biosynthesis of ADP-glucose, a building block required for the elongation reactions to produce glycogen. Catalyzes the reaction between ATP and alpha-D-glucose 1-phosphate (G1P) to produce pyrophosphate and ADP-Glc. This chain is Glucose-1-phosphate adenylyltransferase, found in Corynebacterium aurimucosum (strain ATCC 700975 / DSM 44827 / CIP 107346 / CN-1) (Corynebacterium nigricans).